Consider the following 431-residue polypeptide: Anaerobic glycerol-3-phosphate dehydrogenase subunit B (431 aa).

It belongs to the anaerobic G-3-P dehydrogenase subunit B family. In terms of assembly, composed of a catalytic GlpA/B dimer and of membrane bound GlpC. FMN serves as cofactor.

The catalysed reaction is a quinone + sn-glycerol 3-phosphate = dihydroxyacetone phosphate + a quinol. It participates in polyol metabolism; glycerol degradation via glycerol kinase pathway; glycerone phosphate from sn-glycerol 3-phosphate (anaerobic route): step 1/1. Its function is as follows. Conversion of glycerol 3-phosphate to dihydroxyacetone. Uses fumarate or nitrate as electron acceptor. In Mannheimia succiniciproducens (strain KCTC 0769BP / MBEL55E), this protein is Anaerobic glycerol-3-phosphate dehydrogenase subunit B.